A 609-amino-acid polypeptide reads, in one-letter code: Snake venom metalloproteinase-disintegrin-like mocarhagin (609 aa).

A signal peptide spans M1–S20. Positions I21–L191 are excised as a propeptide. The Peptidase M12B domain occupies K205 to P400. Ca(2+)-binding residues include E208 and D292. A glycan (N-linked (GlcNAc...) asparagine) is linked at N303. 3 disulfide bridges follow: C316/C395, C356/C379, and C358/C363. The Zn(2+) site is built by H341 and H345. 8 residues coordinate Ca(2+): C395, N398, V410, N413, F415, E417, E420, and D423. Positions P408–N494 constitute a Disintegrin domain. 14 disulfides stabilise this stretch: C411–C440, C422–C435, C424–C430, C434–C457, C448–C454, C453–C479, C466–C486, C473–C505, C498–C510, C517–C567, C532–C575, C545–C555, C562–C601, and C595–C606. The D/ECD-tripeptide signature appears at D472–D474. N507 carries N-linked (GlcNAc...) asparagine glycosylation.

Belongs to the venom metalloproteinase (M12B) family. P-III subfamily. P-IIIa sub-subfamily. In terms of assembly, monomer. Zn(2+) is required as a cofactor. Expressed by the venom gland.

The protein localises to the secreted. Its activity is regulated as follows. Inhibited by EDTA and diisopropyl fluorophosphate (DFP). Also inhibited by an excess of zinc or calcium ions. Snake venom zinc metalloproteinase that inhibits platelet aggregation by cleaving platelet glycoprotein Ib alpha (GP1BA) at Glu-298/Asp-299, and abolishes binding of von Willebrand factor (VWF) to GPIBA. Cleaves P-selectin glycoprotein ligand-1 (PSGL-1/SELPLG) at Tyr-51/Asp-52, and completely abolishes the binding of PSGL-1 to P-selectin. Anionic amino acid sequences containing sulfated tyrosines are needed for cleavages. Inhibits the thrombin-induced platelet aggregation, and the thrombin-induced release of ATP and ADP. Has lectin activity (inhibited by heparin). The polypeptide is Snake venom metalloproteinase-disintegrin-like mocarhagin (Naja mossambica (Mozambique spitting cobra)).